We begin with the raw amino-acid sequence, 452 residues long: Probable ECA polymerase (452 aa).

Transmembrane regions (helical) follow at residues 6–26 (FSGL…LTWF), 37–57 (VFFS…TSVL), 63–83 (VGVA…CFYG), 118–138 (VILM…NGFL), 155–175 (GVAL…VYFL), 181–201 (AWLF…MIVG), 207–227 (IIIA…ISLW), 228–248 (MLAA…LKRY), 341–361 (LVVM…GLII), 378–398 (YKAA…IVLA), and 410–430 (VFFL…FWLF).

Belongs to the WzyE family. In terms of assembly, probably part of a complex composed of WzxE, WzyE and WzzE.

It is found in the cell inner membrane. The protein operates within bacterial outer membrane biogenesis; enterobacterial common antigen biosynthesis. Functionally, probably involved in the polymerization of enterobacterial common antigen (ECA) trisaccharide repeat units. This Salmonella typhi protein is Probable ECA polymerase.